The chain runs to 90 residues: Probable Fe(2+)-trafficking protein (90 aa).

Belongs to the Fe(2+)-trafficking protein family.

Its function is as follows. Could be a mediator in iron transactions between iron acquisition and iron-requiring processes, such as synthesis and/or repair of Fe-S clusters in biosynthetic enzymes. This is Probable Fe(2+)-trafficking protein from Leptothrix cholodnii (strain ATCC 51168 / LMG 8142 / SP-6) (Leptothrix discophora (strain SP-6)).